Consider the following 339-residue polypeptide: MSTAVVQADDLMEPSLQSIVSQDTLRWIFVGGKGGVGKTTTSCSLAIQLAKARKSVLLISTDPAHNLSDAFGQKFGKEARLVDGYTNLSAMEIDPNGSIQDLLASGEGQGDDPMAGLGVGNMMQDLAFSIPGVDEAMSFAEVLKQVKSLSYEVIVFDTAPTGHTLRFLQFPTVLEKALAKLSQLSSQFGPMLNSILGSRGGLPGGQNIDELLQKMESLRETISEVNTQFKNPDMTTFVCVCIAEFLSLYETERMIQELTSYNIDTHAIVVNQLLFPKQGSECEQCNARRKMQKKYLEQIEELYEDFNVVRMPLLVEEVRGKEKLEKFSDMLIHPYVPPQ.

K33 to T40 contributes to the ATP binding site. The active site involves D62. E244 and N271 together coordinate ATP. Residues C282 and C285 each contribute to the Zn(2+) site.

This sequence belongs to the arsA ATPase family. In terms of assembly, homodimer.

It is found in the cytoplasm. Its subcellular location is the endoplasmic reticulum. In terms of biological role, ATPase required for the post-translational delivery of tail-anchored (TA) proteins to the endoplasmic reticulum. Recognizes and selectively binds the transmembrane domain of TA proteins in the cytosol. This complex then targets to the endoplasmic reticulum by membrane-bound receptors, where the tail-anchored protein is released for insertion. This process is regulated by ATP binding and hydrolysis. ATP binding drives the homodimer towards the closed dimer state, facilitating recognition of newly synthesized TA membrane proteins. ATP hydrolysis is required for insertion. Subsequently, the homodimer reverts towards the open dimer state, lowering its affinity for the membrane-bound receptor, and returning it to the cytosol to initiate a new round of targeting. This chain is ATPase get3 (get3), found in Aspergillus flavus (strain ATCC 200026 / FGSC A1120 / IAM 13836 / NRRL 3357 / JCM 12722 / SRRC 167).